The following is a 498-amino-acid chain: Trehalose-6-phosphate synthase (498 aa).

Residue Arg28 participates in D-glucose 6-phosphate binding. 48–49 (GG) contacts UDP-alpha-D-glucose. Positions 106 and 160 each coordinate D-glucose 6-phosphate. 2 residues coordinate UDP-alpha-D-glucose: Arg302 and Lys307. Arg340 is a binding site for D-glucose 6-phosphate. Residue 405-409 (LVAKE) coordinates UDP-alpha-D-glucose.

This sequence belongs to the glycosyltransferase 20 family. In terms of assembly, homotetramer.

It carries out the reaction ADP-alpha-D-glucose + D-glucose 6-phosphate = alpha,alpha-trehalose 6-phosphate + ADP + H(+). The catalysed reaction is CDP-alpha-D-glucose + D-glucose 6-phosphate = alpha,alpha-trehalose 6-phosphate + CDP + H(+). The enzyme catalyses GDP-alpha-D-glucose + D-glucose 6-phosphate = alpha,alpha-trehalose 6-phosphate + GDP + H(+). It catalyses the reaction TDP-alpha-D-glucose + D-glucose 6-phosphate = 5-methyl-UDP + alpha,alpha-trehalose 6-phosphate + H(+). It carries out the reaction D-glucose 6-phosphate + UDP-alpha-D-glucose = alpha,alpha-trehalose 6-phosphate + UDP + H(+). It participates in glycan biosynthesis; trehalose biosynthesis. In terms of biological role, probably involved in the osmoprotection via the biosynthesis of trehalose and in the production of glycogen and alpha-glucan via the TreS-Pep2 branch involved in the biosynthesis of maltose-1-phosphate (M1P). Catalyzes the transfer of glucose from UDP-glucose (UDP-Glc) to D-glucose 6-phosphate (Glc-6-P) to form trehalose-6-phosphate. Probably also able to use ADP-Glc, CDP-Glc, GDP-Glc and TDP-Glc as glucosyl donors. The protein is Trehalose-6-phosphate synthase of Mycobacterium leprae (strain TN).